Consider the following 320-residue polypeptide: Zinc finger protein 330 (320 aa).

A disordered region spans residues 1 to 23 (MPKKKTGARKKAENRREREKQLR). Positions 3–11 (KKKTGARKK) match the Nuclear localization signal motif. The span at 10 to 22 (KKAENRREREKQL) shows a compositional bias: basic and acidic residues. 4 C4-type zinc fingers span residues 42–58 (CDKC…CYFC), 67–104 (CAQC…CDFC), 129–149 (CVEC…CSFC), and 175–189 (CVSC…CLRC). The disordered stretch occupies residues 206 to 320 (EKGKQPPCPK…GYAHYEEQEN (115 aa)). Positions 216-225 (CGHETQETKD) are enriched in basic and acidic residues. The span at 269 to 285 (DEEEDEYEAEDDEEEED) shows a compositional bias: acidic residues. Ser291 carries the phosphoserine modification.

Belongs to the NOA36 family. In terms of tissue distribution, widely expressed. Higher expression seen in heart and skeletal muscle.

The protein resides in the nucleus. Its subcellular location is the nucleolus. It is found in the chromosome. It localises to the centromere. The polypeptide is Zinc finger protein 330 (ZNF330) (Homo sapiens (Human)).